The sequence spans 739 residues: Transcription regulator protein BACH1 (739 aa).

One can recognise a BTB domain in the interval 34-100 (CDVTVLVEGQ…AYTAKLILSK (67 aa)). Ser-196 is subject to Phosphoserine. 2 disordered regions span residues 287-321 (MESE…PHGL) and 344-391 (KTVK…RSSV). Basic and acidic residues-rich tracts occupy residues 346–364 (VKTE…KPSE) and 376–391 (PKED…RSSV). Phosphoserine is present on Ser-448. The bZIP domain maps to 560-623 (CIHDIRRRSK…GETKQNLTGL (64 aa)). The segment at 565–581 (RRRSKNRIAAQRCRKRK) is basic motif. Residues 585 to 592 (IQNLESEI) are leucine-zipper. The interval 679 to 708 (PPTAPPPCGRGSSAASQELVQESPPTTAAA) is disordered. Over residues 699–708 (QESPPTTAAA) the composition is skewed to low complexity.

Belongs to the bZIP family. CNC subfamily. In terms of assembly, heterodimer of BACH1 and MAFK. In terms of processing, ubiquitinated by the SCF(FBXL17) complex or by the by the SCF(FBXO22) complex, leading to its degradation by the proteasome. Under oxidative stress, reactive oxygen species covalently modify cysteine residues on the bZIP domain of BACH1 and release it from chromatin. If the BTB domain of BACH1 remains intact, its beta1-alpha6 degron is recognized by FBXO22, promoting its ubiquitination and degradation. If the structural integrity of the beta1-alpha6 degron is compromised, FBXL17 will transiently associate with the BACH1 BTB dimer and remodel it into stably bound monomer for ubiquitination and degradation. As to expression, ubiquitous.

It localises to the nucleus. Its function is as follows. Transcriptional regulator that acts as a repressor or activator, depending on the context. Binds to NF-E2 DNA binding sites. Plays important roles in coordinating transcription activation and repression by MAFK. Together with MAF, represses the transcription of genes under the control of the NFE2L2 oxidative stress pathway. The sequence is that of Transcription regulator protein BACH1 (Bach1) from Mus musculus (Mouse).